The chain runs to 379 residues: Alanine racemase (379 aa).

Lys41 (proton acceptor; specific for D-alanine) is an active-site residue. N6-(pyridoxal phosphate)lysine is present on Lys41. Arg138 contacts substrate. The active-site Proton acceptor; specific for L-alanine is Tyr260. Met319 serves as a coordination point for substrate.

The protein belongs to the alanine racemase family. It depends on pyridoxal 5'-phosphate as a cofactor.

The catalysed reaction is L-alanine = D-alanine. The protein operates within amino-acid biosynthesis; D-alanine biosynthesis; D-alanine from L-alanine: step 1/1. Its function is as follows. Catalyzes the interconversion of L-alanine and D-alanine. May also act on other amino acids. In Rhizobium meliloti (strain 1021) (Ensifer meliloti), this protein is Alanine racemase (alr).